Consider the following 254-residue polypeptide: MTFLAIDVGNTRLKWAMYDAPKPGAAVLAHGAEFLDHIERLADSAWAGLPAPTRMLGCVVAGDAVRRRVMEQMEWWDVPSHWVVPSAEEAGLVNGYDHPTRLGSDRWVAMIGARHRLLRQGPARPLVVVMVGTAVTVEAIDAEGRFLGGLILPGHGIMLRALESGTAGLHVPTGEVKLFPTNTSDALTSGGTYAIAGAVERMVQHVIQHCGEEPACMMTGGAGWKMAPSMTRPFDLIENLIFEGLLAIAAERFR.

7 to 14 serves as a coordination point for ATP; it reads DVGNTRLK. Residues tyrosine 96 and 103–106 each bind substrate; that span reads GSDR. Residue aspartate 105 is the Proton acceptor of the active site. ATP is bound at residue threonine 133. Threonine 183 is a substrate binding site.

It belongs to the type III pantothenate kinase family. In terms of assembly, homodimer. NH4(+) is required as a cofactor. It depends on K(+) as a cofactor.

It is found in the cytoplasm. It catalyses the reaction (R)-pantothenate + ATP = (R)-4'-phosphopantothenate + ADP + H(+). It functions in the pathway cofactor biosynthesis; coenzyme A biosynthesis; CoA from (R)-pantothenate: step 1/5. In terms of biological role, catalyzes the phosphorylation of pantothenate (Pan), the first step in CoA biosynthesis. The polypeptide is Type III pantothenate kinase (Paracidovorax citrulli (strain AAC00-1) (Acidovorax citrulli)).